A 321-amino-acid chain; its full sequence is uncharacterized protein (321 aa).

Tyrosine 49 functions as the Proton donor in the catalytic mechanism. Residue histidine 106 coordinates substrate.

Belongs to the aldo/keto reductase family.

This is an uncharacterized protein from Caenorhabditis elegans.